The sequence spans 397 residues: CCA-adding enzyme (397 aa).

Residues Gly-26 and Arg-29 each coordinate ATP. CTP contacts are provided by Gly-26 and Arg-29. Mg(2+) is bound by residues Asp-39 and Asp-41. Positions 110, 153, 156, 159, and 162 each coordinate ATP. CTP-binding residues include Arg-110, Asp-153, Arg-156, Arg-159, and Arg-162.

The protein belongs to the tRNA nucleotidyltransferase/poly(A) polymerase family. Bacterial CCA-adding enzyme type 3 subfamily. In terms of assembly, homodimer. Mg(2+) is required as a cofactor.

The catalysed reaction is a tRNA precursor + 2 CTP + ATP = a tRNA with a 3' CCA end + 3 diphosphate. It carries out the reaction a tRNA with a 3' CCA end + 2 CTP + ATP = a tRNA with a 3' CCACCA end + 3 diphosphate. Functionally, catalyzes the addition and repair of the essential 3'-terminal CCA sequence in tRNAs without using a nucleic acid template. Adds these three nucleotides in the order of C, C, and A to the tRNA nucleotide-73, using CTP and ATP as substrates and producing inorganic pyrophosphate. tRNA 3'-terminal CCA addition is required both for tRNA processing and repair. Also involved in tRNA surveillance by mediating tandem CCA addition to generate a CCACCA at the 3' terminus of unstable tRNAs. While stable tRNAs receive only 3'-terminal CCA, unstable tRNAs are marked with CCACCA and rapidly degraded. The sequence is that of CCA-adding enzyme from Bacillus cereus (strain Q1).